The sequence spans 211 residues: Imidazole glycerol phosphate synthase subunit HisH (211 aa).

In terms of domain architecture, Glutamine amidotransferase type-1 spans 1–211 (MIGIIDYGMG…ASIIEGKGSM (211 aa)). The active-site Nucleophile is the cysteine 79. Residues histidine 186 and glutamate 188 contribute to the active site.

In terms of assembly, heterodimer of HisH and HisF.

The protein resides in the cytoplasm. The enzyme catalyses 5-[(5-phospho-1-deoxy-D-ribulos-1-ylimino)methylamino]-1-(5-phospho-beta-D-ribosyl)imidazole-4-carboxamide + L-glutamine = D-erythro-1-(imidazol-4-yl)glycerol 3-phosphate + 5-amino-1-(5-phospho-beta-D-ribosyl)imidazole-4-carboxamide + L-glutamate + H(+). It carries out the reaction L-glutamine + H2O = L-glutamate + NH4(+). It functions in the pathway amino-acid biosynthesis; L-histidine biosynthesis; L-histidine from 5-phospho-alpha-D-ribose 1-diphosphate: step 5/9. In terms of biological role, IGPS catalyzes the conversion of PRFAR and glutamine to IGP, AICAR and glutamate. The HisH subunit catalyzes the hydrolysis of glutamine to glutamate and ammonia as part of the synthesis of IGP and AICAR. The resulting ammonia molecule is channeled to the active site of HisF. The sequence is that of Imidazole glycerol phosphate synthase subunit HisH from Geobacillus sp. (strain WCH70).